The sequence spans 248 residues: UDP-2,3-diacylglucosamine hydrolase (248 aa).

Positions 7, 9, 40, 78, and 113 each coordinate Mn(2+). 78-79 (NR) provides a ligand contact to substrate. Residues Asp-121, Ser-159, Thr-163, Lys-166, and His-194 each contribute to the substrate site. The Mn(2+) site is built by His-194 and His-196.

Belongs to the LpxH family. Requires Mn(2+) as cofactor.

Its subcellular location is the cell inner membrane. It catalyses the reaction UDP-2-N,3-O-bis[(3R)-3-hydroxytetradecanoyl]-alpha-D-glucosamine + H2O = 2-N,3-O-bis[(3R)-3-hydroxytetradecanoyl]-alpha-D-glucosaminyl 1-phosphate + UMP + 2 H(+). It functions in the pathway glycolipid biosynthesis; lipid IV(A) biosynthesis; lipid IV(A) from (3R)-3-hydroxytetradecanoyl-[acyl-carrier-protein] and UDP-N-acetyl-alpha-D-glucosamine: step 4/6. In terms of biological role, hydrolyzes the pyrophosphate bond of UDP-2,3-diacylglucosamine to yield 2,3-diacylglucosamine 1-phosphate (lipid X) and UMP by catalyzing the attack of water at the alpha-P atom. Involved in the biosynthesis of lipid A, a phosphorylated glycolipid that anchors the lipopolysaccharide to the outer membrane of the cell. In Pseudomonas fluorescens (strain Pf0-1), this protein is UDP-2,3-diacylglucosamine hydrolase.